Reading from the N-terminus, the 295-residue chain is Small ribosomal subunit protein bS1 (295 aa).

3 consecutive S1 motif domains span residues 28–97 (GQLV…VSLR), 115–179 (GQTV…LSER), and 193–261 (GQLI…LSTK).

Belongs to the bacterial ribosomal protein bS1 family.

Its function is as follows. Binds mRNA. In Synechococcus elongatus (strain ATCC 33912 / PCC 7942 / FACHB-805) (Anacystis nidulans R2), this protein is Small ribosomal subunit protein bS1 (rpsA).